Consider the following 1363-residue polypeptide: Insulin-like peptide receptor (1363 aa).

A signal peptide spans 1–29 (MRVVDKMAGLMWAALTLVIGLGLLVPSNG). 16 N-linked (GlcNAc...) asparagine glycosylation sites follow: N51, N97, N137, N278, N483, N599, N617, N665, N666, N711, N732, N736, N743, N816, N885, and N898. Fibronectin type-III domains lie at 473-586 (SFSR…TDAD) and 590-680 (HPQD…CPKS). Fibronectin type-III domains are found at residues 712 to 804 (ETRA…LART) and 813 to 912 (IPGN…VEEE). At 721-928 (ELPVTARPFY…QDPQQQVPVS (208 aa)) the chain is on the extracellular side. Residues 739-759 (LPSTNRTVPPTPTPNPNPQLE) form a disordered region. The chain crosses the membrane as a helical span at residues 929–949 (LMIGMGVGFSLLLILAVIFGI). Topologically, residues 950-1363 (WYCTKKRFGD…NLRIPKSTLC (414 aa)) are cytoplasmic. A Protein kinase domain is found at 994–1283 (ITLIRELGQG…EIVEILSPEL (290 aa)). Residues 1000–1008 (LGQGSFGMV) and K1028 each bind ATP. The interval 1091–1117 (PEEDVGLSDSPASNEAKNSPFAENDND) is disordered. D1148 acts as the Proton acceptor in catalysis. Y1174 carries the phosphotyrosine; by autocatalysis modification. The segment at 1316–1363 (DTETEMYPSGSEFSSTPSPPSETPYSHMNGSHPQNGSMNLRIPKSTLC) is disordered. Residues 1322-1331 (YPSGSEFSST) are compositionally biased toward low complexity. Polar residues predominate over residues 1343 to 1353 (MNGSHPQNGSM).

Belongs to the protein kinase superfamily. Tyr protein kinase family. Insulin receptor subfamily. As to quaternary structure, probable tetramer of 2 alpha and 2 beta chains linked by disulfide bonds. The alpha chains contribute to the formation of the ligand-binding domain, while the beta chains carry the kinase domain. Mn(2+) is required as a cofactor.

Its subcellular location is the membrane. It catalyses the reaction L-tyrosyl-[protein] + ATP = O-phospho-L-tyrosyl-[protein] + ADP + H(+). In terms of biological role, this receptor binds to the insulin related peptide and has a tyrosine-protein kinase activity. The chain is Insulin-like peptide receptor from Branchiostoma lanceolatum (Common lancelet).